A 161-amino-acid polypeptide reads, in one-letter code: UPF0262 protein Meso_0189 (161 aa).

This sequence belongs to the UPF0262 family.

This chain is UPF0262 protein Meso_0189, found in Chelativorans sp. (strain BNC1).